The chain runs to 217 residues: Large ribosomal subunit protein uL3 (217 aa).

It belongs to the universal ribosomal protein uL3 family. As to quaternary structure, part of the 50S ribosomal subunit. Forms a cluster with proteins L14 and L19.

One of the primary rRNA binding proteins, it binds directly near the 3'-end of the 23S rRNA, where it nucleates assembly of the 50S subunit. The polypeptide is Large ribosomal subunit protein uL3 (Mycolicibacterium smegmatis (strain ATCC 700084 / mc(2)155) (Mycobacterium smegmatis)).